The following is a 148-amino-acid chain: PTS system fructose-like EIIA component (148 aa).

In terms of domain architecture, PTS EIIA type-2 spans 2–145 (AALTASCIDL…DQVLALLNQT (144 aa)). Residue H64 is the Tele-phosphohistidine intermediate of the active site. H64 is subject to Phosphohistidine; by HPr.

Its subcellular location is the cytoplasm. The phosphoenolpyruvate-dependent sugar phosphotransferase system (sugar PTS), a major carbohydrate active transport system, catalyzes the phosphorylation of incoming sugar substrates concomitantly with their translocation across the cell membrane. The enzyme II FrvAB PTS system is involved in fructose transport. The chain is PTS system fructose-like EIIA component from Escherichia coli (strain K12).